The sequence spans 1902 residues: Plexin-B3 (1902 aa).

Residues 1-34 (MLTDFLQAPVMAPWSPFSLHLLLLFLLLLPLTRA) form the signal peptide. Positions 35 to 461 (HRFSVPNASF…TAQQVDRILV (427 aa)) constitute a Sema domain. The Extracellular portion of the chain corresponds to 35–1245 (HRFSVPNASF…MISTFPVEAQ (1211 aa)). A glycan (N-linked (GlcNAc...) asparagine) is linked at asparagine 41. 2 disulfides stabilise this stretch: cysteine 88–cysteine 97 and cysteine 122–cysteine 130. N-linked (GlcNAc...) asparagine glycosylation occurs at asparagine 221. Intrachain disulfides connect cysteine 257–cysteine 360, cysteine 273–cysteine 305, and cysteine 323–cysteine 347. The segment at 353–372 (DSPESYPCGDEHTPSPIAGR) is disordered. Asparagine 416 and asparagine 469 each carry an N-linked (GlcNAc...) asparagine glycan. The 53-residue stretch at 463–515 (ACPQFPNCTTCLQARDPLCGWCILQGRCTRRAECGRAVQPNQWLWSYEDNHCL) folds into the PSI 1 domain. 5 disulfide bridges follow: cysteine 464-cysteine 481, cysteine 470-cysteine 514, cysteine 473-cysteine 490, cysteine 484-cysteine 496, and cysteine 551-cysteine 569. PSI domains follow at residues 609–671 (DCSA…EACP) and 776–822 (DCAM…QLCP). Asparagine 791, asparagine 889, asparagine 946, asparagine 1090, and asparagine 1207 each carry an N-linked (GlcNAc...) asparagine glycan. 3 IPT/TIG domains span residues 824 to 913 (PSID…HFTY), 915 to 1001 (DPVL…FRYT), and 1003 to 1134 (NPQL…FLYQ). A helical transmembrane segment spans residues 1246–1266 (VGLGMGAAMLIAAVLLLTLMY). At 1267-1902 (RHKSKQALRD…ALVEYKVTDL (636 aa)) the chain is on the cytoplasmic side.

It belongs to the plexin family. In terms of assembly, binds MET and MST1R. Interacts with RIT2/RIN. Interacts (via cytoplasmic domain) with FSCN1 and RAC1. May form homodimers (via Sema domain). Interacts (via cytoplasmic domain) with ARHGDIA. As to expression, expressed in glioma cells (at protein level). Expressed in glioma cells and oligodendrocyte precursor cells.

It is found in the cell membrane. Receptor for SEMA5A that plays a role in axon guidance, invasive growth and cell migration. Stimulates neurite outgrowth and mediates Ca(2+)/Mg(2+)-dependent cell aggregation. In glioma cells, SEMA5A stimulation of PLXNB3 results in the disassembly of F-actin stress fibers, disruption of focal adhesions and cellular collapse as well as inhibition of cell migration and invasion through ARHGDIA-mediated inactivation of RAC1. The polypeptide is Plexin-B3 (Plxnb3) (Rattus norvegicus (Rat)).